A 199-amino-acid polypeptide reads, in one-letter code: TATA-box-binding protein (199 aa).

2 consecutive repeat copies span residues 10–86 (IENI…VKLL) and 101–177 (VQNI…YNQL).

It belongs to the TBP family.

Functionally, general factor that plays a role in the activation of archaeal genes transcribed by RNA polymerase. Binds specifically to the TATA box promoter element which lies close to the position of transcription initiation. The chain is TATA-box-binding protein from Pyrobaculum islandicum (strain DSM 4184 / JCM 9189 / GEO3).